The sequence spans 378 residues: MPVKLRWPWLGIAIPTFLISFIGYGAHYFILSNFLSVPKQITFEFCLSMIWLSYYLAICTNPGRPLPNYKPPPDIWRNFCKKCQSYKPERSHHCKTCNQCVLMMDHHCPWTMNCVGFANYPHFLRFLFWIIVTTSVLFCIQAKRIYFIWQQRHLPGYFFKKSELIFLTISSPLNSFVLLTITILFLRCLFNQILNGRSQIESWDMDRLESLFNSGRLTQKLIDNTWRIYPESRSFQNKKDAEEHLTKKRPRFDELVNFPYDFDLYTNALLYLGPIHLWLWPYGVPTGDGNNFPKNGISKYEANSSLEDHILSLPWPPDGGKTNTVFNHGSSTIEMRNESGEQLIRTRLPQNGRHASREKWYNDWGESLDDFGVDVDME.

Topologically, residues 1 to 9 (MPVKLRWPW) are cytoplasmic. Residues 10–30 (LGIAIPTFLISFIGYGAHYFI) form a helical membrane-spanning segment. The Lumenal segment spans residues 31-40 (LSNFLSVPKQ). Residues 41 to 61 (ITFEFCLSMIWLSYYLAICTN) form a helical membrane-spanning segment. The Cytoplasmic portion of the chain corresponds to 62 to 119 (PGRPLPNYKPPPDIWRNFCKKCQSYKPERSHHCKTCNQCVLMMDHHCPWTMNCVGFAN). A DHHC domain is found at 78-128 (NFCKKCQSYKPERSHHCKTCNQCVLMMDHHCPWTMNCVGFANYPHFLRFLF). The active-site S-palmitoyl cysteine intermediate is C108. The chain crosses the membrane as a helical span at residues 120-140 (YPHFLRFLFWIIVTTSVLFCI). Over 141–164 (QAKRIYFIWQQRHLPGYFFKKSEL) the chain is Lumenal. Residues 165-185 (IFLTISSPLNSFVLLTITILF) form a helical membrane-spanning segment. At 186–378 (LRCLFNQILN…DDFGVDVDME (193 aa)) the chain is on the cytoplasmic side.

This sequence belongs to the DHHC palmitoyltransferase family. PFA4 subfamily. Autopalmitoylated.

The protein localises to the endoplasmic reticulum membrane. It carries out the reaction L-cysteinyl-[protein] + hexadecanoyl-CoA = S-hexadecanoyl-L-cysteinyl-[protein] + CoA. In terms of biological role, mediates the reversible addition of palmitate to target proteins, thereby regulating their membrane association and biological function. Palmitoylates several amino acid permeases. Palmitoylates chitin synthase CHS3, which is required for its proper export from the ER. Can palmitoylate RAS2 in vitro. In Saccharomyces cerevisiae (strain ATCC 204508 / S288c) (Baker's yeast), this protein is Palmitoyltransferase PFA4.